A 138-amino-acid polypeptide reads, in one-letter code: Large-conductance mechanosensitive channel (138 aa).

2 helical membrane passes run 10–30 (FAMR…AAFG) and 76–96 (GSFI…FLAI).

Belongs to the MscL family. As to quaternary structure, homopentamer.

The protein localises to the cell inner membrane. Channel that opens in response to stretch forces in the membrane lipid bilayer. May participate in the regulation of osmotic pressure changes within the cell. This Serratia proteamaculans (strain 568) protein is Large-conductance mechanosensitive channel.